Reading from the N-terminus, the 384-residue chain is Lipid-A-disaccharide synthase (384 aa).

It belongs to the LpxB family.

The enzyme catalyses 2-N,3-O-bis[(3R)-3-hydroxytetradecanoyl]-alpha-D-glucosaminyl 1-phosphate + UDP-2-N,3-O-bis[(3R)-3-hydroxytetradecanoyl]-alpha-D-glucosamine = lipid A disaccharide (E. coli) + UDP + H(+). The catalysed reaction is a lipid X + a UDP-2-N,3-O-bis[(3R)-3-hydroxyacyl]-alpha-D-glucosamine = a lipid A disaccharide + UDP + H(+). The protein operates within glycolipid biosynthesis; lipid IV(A) biosynthesis; lipid IV(A) from (3R)-3-hydroxytetradecanoyl-[acyl-carrier-protein] and UDP-N-acetyl-alpha-D-glucosamine: step 5/6. Its function is as follows. Condensation of UDP-2,3-diacylglucosamine and 2,3-diacylglucosamine-1-phosphate to form lipid A disaccharide, a precursor of lipid A, a phosphorylated glycolipid that anchors the lipopolysaccharide to the outer membrane of the cell. This chain is Lipid-A-disaccharide synthase, found in Blochmanniella floridana.